The following is a 300-amino-acid chain: Zinc finger CCCH domain-containing protein 14 (300 aa).

The segment at 1–38 is disordered; it reads MEVGGRKRGKPDGANGAGGKRARESESFQTGVGSKSKP. C3H1-type zinc fingers lie at residues 33-61 and 99-127; these read GSKS…HHFP and TVKT…HGER. Residues 170–234 form the KH domain; it reads SATAKISVDA…DQIKNASAMV (65 aa). The segment at 243 to 262 is disordered; it reads GGAPPQGKKPVGGSHRGGGP. Residues 265–292 form a C3H1-type 3 zinc finger; the sequence is NFKTKLCENFTKGSCTFGDRCHFAHGEN.

The sequence is that of Zinc finger CCCH domain-containing protein 14 from Oryza sativa subsp. japonica (Rice).